The chain runs to 255 residues: Large ribosomal subunit protein uL4 (255 aa).

Belongs to the universal ribosomal protein uL4 family. Part of the 50S ribosomal subunit.

Functionally, one of the primary rRNA binding proteins, this protein initially binds near the 5'-end of the 23S rRNA. It is important during the early stages of 50S assembly. It makes multiple contacts with different domains of the 23S rRNA in the assembled 50S subunit and ribosome. Forms part of the polypeptide exit tunnel. This is Large ribosomal subunit protein uL4 from Thermococcus onnurineus (strain NA1).